Reading from the N-terminus, the 129-residue chain is Glycine cleavage system H protein (129 aa).

Positions 23–104 constitute a Lipoyl-binding domain; sequence TATIGITQHA…AYAAWLFRLK (82 aa). Lysine 64 bears the N6-lipoyllysine mark.

This sequence belongs to the GcvH family. As to quaternary structure, the glycine cleavage system is composed of four proteins: P, T, L and H. Requires (R)-lipoate as cofactor.

In terms of biological role, the glycine cleavage system catalyzes the degradation of glycine. The H protein shuttles the methylamine group of glycine from the P protein to the T protein. This is Glycine cleavage system H protein from Nitrosospira multiformis (strain ATCC 25196 / NCIMB 11849 / C 71).